A 544-amino-acid chain; its full sequence is Coiled-coil domain-containing protein 82 (544 aa).

A compositionally biased stretch (basic residues) spans Met-1–Lys-14. The interval Met-1 to Ile-294 is disordered. The segment covering His-16 to Arg-27 has biased composition (basic and acidic residues). A compositionally biased stretch (acidic residues) spans Asp-39–Leu-67. Phosphoserine is present on residues Ser-88, Ser-131, Ser-154, Ser-195, and Ser-219. Residues Ser-88–Thr-108 are compositionally biased toward polar residues. Positions Glu-112–Gln-132 are enriched in basic and acidic residues. Over residues Met-223–Lys-248 the composition is skewed to basic and acidic residues. Thr-227 carries the post-translational modification Phosphothreonine. The stretch at Glu-229 to Ser-256 forms a coiled coil. A compositionally biased stretch (acidic residues) spans Asp-273–Ile-294. Residue Ser-329 is modified to Phosphoserine.

The protein is Coiled-coil domain-containing protein 82 (CCDC82) of Homo sapiens (Human).